The sequence spans 166 residues: MASITFKGNPMTLLGNEVKVGDKAPNFTVLANDLSPVTLDDSKGKVRLISVVPSIDTGVCDAQTRKFNEEAANLDGVEVLTVSVDLPFAQKRWCATAGLEQAKTLSDHRDLSFGKAYGVAIEELRLLARAVFVINANDEVTYVEYVSEATNHPDYEKAIEAAKAAL.

Positions 18 to 164 (VKVGDKAPNF…YEKAIEAAKA (147 aa)) constitute a Thioredoxin domain. The Cysteine sulfenic acid (-SOH) intermediate role is filled by cysteine 60. Cysteine 60 and cysteine 94 are oxidised to a cystine.

Belongs to the peroxiredoxin family. Tpx subfamily. As to quaternary structure, homodimer.

The catalysed reaction is a hydroperoxide + [thioredoxin]-dithiol = an alcohol + [thioredoxin]-disulfide + H2O. Thiol-specific peroxidase that catalyzes the reduction of hydrogen peroxide and organic hydroperoxides to water and alcohols, respectively. Plays a role in cell protection against oxidative stress by detoxifying peroxides. The chain is Thiol peroxidase from Halalkalibacterium halodurans (strain ATCC BAA-125 / DSM 18197 / FERM 7344 / JCM 9153 / C-125) (Bacillus halodurans).